Consider the following 350-residue polypeptide: Pro-cathepsin H (350 aa).

The N-terminal stretch at 1-19 (MAQWTLLIVFFCVATAAAG) is a signal peptide. The propeptide at 20-113 (LSFHDSNPIR…WEEFRSHRLG (94 aa)) is activation peptide. The N-linked (GlcNAc...) asparagine glycan is linked to asparagine 117. Positions 122–132 (LKGNHRITDVV) are cleaved as a propeptide — removed in mature form. 2 disulfide bridges follow: cysteine 154/cysteine 197 and cysteine 188/cysteine 230. Cysteine 157 is a catalytic residue. N-linked (GlcNAc...) asparagine glycosylation occurs at asparagine 177. Asparagine 246 is a glycosylation site (N-linked (GlcNAc...) asparagine). Cysteine 288 and cysteine 338 form a disulfide bridge. Residues histidine 297 and asparagine 317 contribute to the active site.

This sequence belongs to the peptidase C1 family. As to quaternary structure, interacts with KPI104 and KPI106. Composed of a mini chain and a large chain. The large chain may be split into heavy and light chain. All chains are held together by disulfide bonds.

The protein localises to the vacuole. The protein resides in the lysosome. It catalyses the reaction Hydrolysis of proteins, acting as an aminopeptidase (notably, cleaving Arg-|-Xaa bonds) as well as an endopeptidase.. May play a role in proteolysis leading to mobilization of nitrogen during senescence and starvation. This is Pro-cathepsin H from Medicago truncatula (Barrel medic).